Here is an 80-residue protein sequence, read N- to C-terminus: Clavanin-A (80 aa).

The signal sequence occupies residues 1 to 19 (MKTTILILLILGLGINAKS). Residues 20–29 (LEERKSEEEK) constitute a propeptide that is removed on maturation. F52 bears the Phenylalanine amide mark. Positions 54-80 (DDQQDNGKFYGHYAEDNGKHWYDTGDQ) are excised as a propeptide.

Its subcellular location is the secreted. Its function is as follows. Has antimicrobial activity. The polypeptide is Clavanin-A (Styela clava (Sea squirt)).